Reading from the N-terminus, the 30-residue chain is Cycloviolacin-O10 (30 aa).

Positions 1 to 30 (GIPCGESCVYIPCLTSAVGCSCKSKVCYRN) form a cross-link, cyclopeptide (Gly-Asn). Cystine bridges form between C4-C20, C8-C22, and C13-C27.

This is a cyclic peptide. Expressed in petals and roots but not in leaves, petioles and runners (at protein level).

Functionally, probably participates in a plant defense mechanism. The sequence is that of Cycloviolacin-O10 from Viola odorata (Sweet violet).